Consider the following 428-residue polypeptide: Flotillin-2 (428 aa).

G2 carries N-myristoyl glycine lipidation. Residue C4 is the site of S-palmitoyl cysteine; by ZDHHC5 attachment. C19 is lipidated: S-palmitoyl cysteine. C20 carries S-palmitoyl cysteine; by ZDHHC5 lipidation. S405 carries the phosphoserine modification.

It belongs to the band 7/mec-2 family. Flotillin subfamily. Heterooligomeric complex of flotillin-1 and flotillin-2 and caveolin-1 and caveolin-2. Interacts with ECPAS. Post-translationally, ZDHHC5-catalyzed palmitoylation may be required for the formation of higher-order complexes and for neurite outgrowth in cultured neural stem cells.

It is found in the cell membrane. It localises to the membrane. The protein localises to the caveola. Its subcellular location is the endosome. May act as a scaffolding protein within caveolar membranes, functionally participating in formation of caveolae or caveolae-like vesicles. May be involved in epidermal cell adhesion and epidermal structure and function. The chain is Flotillin-2 (FLOT2) from Bos taurus (Bovine).